The sequence spans 941 residues: Bifunctional uridylyltransferase/uridylyl-removing enzyme (941 aa).

Residues 1–372 (MAKHDLSDAT…RFAHRPRRIP (372 aa)) form a uridylyltransferase region. Positions 373-728 (GTPEFIEDRG…VRTHSFHAIT (356 aa)) are uridylyl-removing. One can recognise an HD domain in the interval 489-611 (VDEHLIRSVG…VQSLDRLRML (123 aa)). ACT domains follow at residues 729–810 (EITV…EVIA) and 840–919 (VIEI…LREQ). Residues 916–941 (LREQMPSGIIAPAATKSPAAEKKARV) are disordered.

Belongs to the GlnD family. Mg(2+) is required as a cofactor.

The catalysed reaction is [protein-PII]-L-tyrosine + UTP = [protein-PII]-uridylyl-L-tyrosine + diphosphate. It carries out the reaction [protein-PII]-uridylyl-L-tyrosine + H2O = [protein-PII]-L-tyrosine + UMP + H(+). Uridylyltransferase (UTase) activity is inhibited by glutamine, while glutamine activates uridylyl-removing (UR) activity. Modifies, by uridylylation and deuridylylation, the PII regulatory proteins (GlnB and homologs), in response to the nitrogen status of the cell that GlnD senses through the glutamine level. Under low glutamine levels, catalyzes the conversion of the PII proteins and UTP to PII-UMP and PPi, while under higher glutamine levels, GlnD hydrolyzes PII-UMP to PII and UMP (deuridylylation). Thus, controls uridylylation state and activity of the PII proteins, and plays an important role in the regulation of nitrogen assimilation and metabolism. The chain is Bifunctional uridylyltransferase/uridylyl-removing enzyme from Allorhizobium ampelinum (strain ATCC BAA-846 / DSM 112012 / S4) (Agrobacterium vitis (strain S4)).